A 132-amino-acid chain; its full sequence is D-ribose pyranase (132 aa).

His-20 functions as the Proton donor in the catalytic mechanism. Substrate is bound by residues Asp-28, His-99, and 121–123; that span reads YSN.

This sequence belongs to the RbsD / FucU family. RbsD subfamily. As to quaternary structure, homodecamer.

It localises to the cytoplasm. It carries out the reaction beta-D-ribopyranose = beta-D-ribofuranose. The protein operates within carbohydrate metabolism; D-ribose degradation; D-ribose 5-phosphate from beta-D-ribopyranose: step 1/2. In terms of biological role, catalyzes the interconversion of beta-pyran and beta-furan forms of D-ribose. The sequence is that of D-ribose pyranase from Streptococcus uberis (strain ATCC BAA-854 / 0140J).